Here is a 520-residue protein sequence, read N- to C-terminus: Cytochrome P450 6d3 (520 aa).

Residue Cys461 participates in heme binding.

It belongs to the cytochrome P450 family. The cofactor is heme.

It localises to the endoplasmic reticulum membrane. It is found in the microsome membrane. Functionally, metabolizes pyrethroid insecticides and other xenobiotics. The polypeptide is Cytochrome P450 6d3 (CYP6D3) (Musca domestica (House fly)).